The chain runs to 336 residues: tRNA N6-adenosine threonylcarbamoyltransferase (336 aa).

2 residues coordinate Fe cation: His114 and His118. Substrate contacts are provided by residues 136–140 (LVSGG), Asp169, Gly182, Asp186, and Asn275. Asp301 is a Fe cation binding site.

Belongs to the KAE1 / TsaD family. Fe(2+) is required as a cofactor.

Its subcellular location is the cytoplasm. The catalysed reaction is L-threonylcarbamoyladenylate + adenosine(37) in tRNA = N(6)-L-threonylcarbamoyladenosine(37) in tRNA + AMP + H(+). Functionally, required for the formation of a threonylcarbamoyl group on adenosine at position 37 (t(6)A37) in tRNAs that read codons beginning with adenine. Is involved in the transfer of the threonylcarbamoyl moiety of threonylcarbamoyl-AMP (TC-AMP) to the N6 group of A37, together with TsaE and TsaB. TsaD likely plays a direct catalytic role in this reaction. In Streptococcus pneumoniae (strain ATCC 700669 / Spain 23F-1), this protein is tRNA N6-adenosine threonylcarbamoyltransferase.